The chain runs to 519 residues: Probable pectinesterase/pectinesterase inhibitor 36 (519 aa).

Positions 1 to 25 are cleaved as a signal peptide; sequence MSTFVKVTDLITIMFFLAIAAVITA. The interval 27–141 is pectinesterase inhibitor 36; sequence NTAELDVLEM…TFVLHEALAF (115 aa). N-linked (GlcNAc...) asparagine glycans are attached at residues asparagine 92 and asparagine 130. The interval 147–196 is disordered; the sequence is GHMKKRLHGPARQGHGPTRPKHRPTRPNHGPGRSHHGPSRPNQNGGMLVS. The span at 164 to 184 shows a compositional bias: basic residues; sequence TRPKHRPTRPNHGPGRSHHGP. Over residues 186–196 the composition is skewed to polar residues; the sequence is RPNQNGGMLVS. Residues 205–505 are pectinesterase 36; the sequence is DFVVARDGSA…FTVSRFIQGD (301 aa). Residues threonine 283 and glutamine 313 each coordinate substrate. Residue aspartate 336 is the Proton donor; for pectinesterase activity of the active site. Residue aspartate 357 is the Nucleophile; for pectinesterase activity of the active site. Substrate-binding residues include arginine 425 and tryptophan 427.

This sequence in the N-terminal section; belongs to the PMEI family. In the C-terminal section; belongs to the pectinesterase family. As to expression, expressed in siliques.

The protein resides in the secreted. The protein localises to the cell wall. The enzyme catalyses [(1-&gt;4)-alpha-D-galacturonosyl methyl ester](n) + n H2O = [(1-&gt;4)-alpha-D-galacturonosyl](n) + n methanol + n H(+). It functions in the pathway glycan metabolism; pectin degradation; 2-dehydro-3-deoxy-D-gluconate from pectin: step 1/5. Functionally, acts in the modification of cell walls via demethylesterification of cell wall pectin. This Arabidopsis thaliana (Mouse-ear cress) protein is Probable pectinesterase/pectinesterase inhibitor 36 (PME36).